We begin with the raw amino-acid sequence, 375 residues long: Tyrosine--tRNA ligase (375 aa).

Residues Tyr-37, Tyr-168, Gln-172, Asp-175, and Gln-190 each coordinate L-tyrosine. Positions 251-255 (KMSKS) match the 'KMSKS' region motif. Residue Lys-254 participates in ATP binding.

It belongs to the class-I aminoacyl-tRNA synthetase family. TyrS type 4 subfamily. Homodimer.

The protein localises to the cytoplasm. It catalyses the reaction tRNA(Tyr) + L-tyrosine + ATP = L-tyrosyl-tRNA(Tyr) + AMP + diphosphate + H(+). Functionally, catalyzes the attachment of tyrosine to tRNA(Tyr) in a two-step reaction: tyrosine is first activated by ATP to form Tyr-AMP and then transferred to the acceptor end of tRNA(Tyr). In Thermococcus sibiricus (strain DSM 12597 / MM 739), this protein is Tyrosine--tRNA ligase.